The following is a 324-amino-acid chain: Beta-ketoacyl-[acyl-carrier-protein] synthase III (324 aa).

Catalysis depends on residues Cys-113 and His-251. An ACP-binding region spans residues 252-256 (QANKR). The active site involves Asn-281.

It belongs to the thiolase-like superfamily. FabH family. In terms of assembly, homodimer.

It is found in the cytoplasm. The enzyme catalyses malonyl-[ACP] + acetyl-CoA + H(+) = 3-oxobutanoyl-[ACP] + CO2 + CoA. The protein operates within lipid metabolism; fatty acid biosynthesis. In terms of biological role, catalyzes the condensation reaction of fatty acid synthesis by the addition to an acyl acceptor of two carbons from malonyl-ACP. Catalyzes the first condensation reaction which initiates fatty acid synthesis and may therefore play a role in governing the total rate of fatty acid production. Possesses both acetoacetyl-ACP synthase and acetyl transacylase activities. Its substrate specificity determines the biosynthesis of branched-chain and/or straight-chain of fatty acids. The chain is Beta-ketoacyl-[acyl-carrier-protein] synthase III from Bartonella tribocorum (strain CIP 105476 / IBS 506).